The sequence spans 102 residues: MYAVIKTGGKQYKVSEGDLVKIEKIEGAVGDTIELDEVLMVGGEEVKIGTPLLPGAKVTARIVQQGKDKKVLVFHSKRRKGYRKTYGHRQPITRLQITGIEA.

The protein belongs to the bacterial ribosomal protein bL21 family. As to quaternary structure, part of the 50S ribosomal subunit. Contacts protein L20.

In terms of biological role, this protein binds to 23S rRNA in the presence of protein L20. The polypeptide is Large ribosomal subunit protein bL21 (Syntrophotalea carbinolica (strain DSM 2380 / NBRC 103641 / GraBd1) (Pelobacter carbinolicus)).